Reading from the N-terminus, the 373-residue chain is 4-hydroxy-3-methylbut-2-en-1-yl diphosphate synthase (flavodoxin) (373 aa).

Residues C270, C273, C305, and E312 each contribute to the [4Fe-4S] cluster site.

It belongs to the IspG family. The cofactor is [4Fe-4S] cluster.

The catalysed reaction is (2E)-4-hydroxy-3-methylbut-2-enyl diphosphate + oxidized [flavodoxin] + H2O + 2 H(+) = 2-C-methyl-D-erythritol 2,4-cyclic diphosphate + reduced [flavodoxin]. The protein operates within isoprenoid biosynthesis; isopentenyl diphosphate biosynthesis via DXP pathway; isopentenyl diphosphate from 1-deoxy-D-xylulose 5-phosphate: step 5/6. Functionally, converts 2C-methyl-D-erythritol 2,4-cyclodiphosphate (ME-2,4cPP) into 1-hydroxy-2-methyl-2-(E)-butenyl 4-diphosphate. The sequence is that of 4-hydroxy-3-methylbut-2-en-1-yl diphosphate synthase (flavodoxin) from Photorhabdus laumondii subsp. laumondii (strain DSM 15139 / CIP 105565 / TT01) (Photorhabdus luminescens subsp. laumondii).